Consider the following 712-residue polypeptide: Methylmalonyl-CoA mutase (712 aa).

Residues 73-77, 183-185, arginine 195, lysine 222, histidine 232, and 271-273 each bind substrate; these read TVRQY, TIQ, and RLS. The B12-binding domain maps to 580-712; sequence KPKIMVAKLG…DLIEGKRRNV (133 aa). An adenosylcob(III)alamin-binding site is contributed by histidine 593.

The protein belongs to the methylmalonyl-CoA mutase family. As to quaternary structure, homodimer. It depends on adenosylcob(III)alamin as a cofactor. The cofactor is a monovalent cation.

It catalyses the reaction (R)-methylmalonyl-CoA = succinyl-CoA. The protein operates within metabolic intermediate metabolism; propanoyl-CoA degradation; succinyl-CoA from propanoyl-CoA: step 3/3. Radical enzyme that catalyzes the transformation of methylmalonyl-CoA to succinyl-CoA. Is required for growth on the polyhydroxyalkanoate degradation pathway intermediates 3-hydroxybutyrate and acetoacetate as sole carbon source. The protein is Methylmalonyl-CoA mutase of Rhizobium meliloti (strain 1021) (Ensifer meliloti).